The chain runs to 607 residues: MDNLSDTLKKLKITAADRTEGSLEGCLDCLLQALAQNNAETSEKIQGSGILQLFANLLTPQASCTAKVADIIAEVAKNEFMRIPCVDAGLISPLVQLLNSKDQEVLLQTGRALGNICYDSHEGRSAVDQAGGAQIVIDHLRSLCGRTDPASEKLMTVFCGMLMNYSNENDSLQAQLISMGVIPTLVKLLGIHCHNAALTEMCLVAFGNLAELESSKEQFASTNIAEELVKLFKKQIEHDKREMIFEVLAPLAENDAIKLQLVEAGLVECLLEIVQQKVDSNKEDDVAELKTASDLMVLLLLGDESMQKLFEGGKGSVFQRVLSWIPSNNHQLQLAGALAIANFARNDGNCIHMVDNGIVEKLMDLLDRHVEDGNVTVQHAALSALRNLAIPVVNKAKMLSAGVTETVLKFLKSEMPPVQFKLLGTLRMLIDAQAEAAEQLGKNAKLVERLVEWCEAKDHAGVMGESNRLLSALIRHSKSKDVIKTIVQSGGIKHLVTMATSEHVIMQNEALVALALIAALELGPAEKDLASAQLVQILHRLLADERSAPEIKYNSMVLICALMGSESLYKEVQDLAFLDVVSKLRSHENKSVAQQASLTEQRLTVES.

ARM repeat units lie at residues 89-131 (GLIS…DQAG) and 170-211 (DSLQ…NLAE). Positions 122-170 (EGRSAVDQAGGAQIVIDHLRSLCGRTDPASEKLMTVFCGMLMNYSNEND) are prevents binding to prenylated RHOA. The residue at position 230 (K230) is an N6-acetyllysine. ARM repeat units follow at residues 347–390 (DGNC…NLAI), 391–431 (PVVN…MLID), and 479–519 (SKDV…LIAA).

Interacts with RABL3. Interacts with RHOT1. As to quaternary structure, interacts with unprenylated RHOA; the interaction is direct. Interacts with RAP1A. Interacts with KRAS. Interacts with RAC1. Interacts with RAP1B. Preferentially interacts with unprenylated GTPases that will become geranylgeranylated. May also interact with prenylated GTPases. In terms of assembly, interacts with prenylated RHOA; the interaction is direct and in a 1:1 stoichiometry. Interacts with RAP1A. Interacts with KRAS. Interacts with RAC1. Interacts with RAP1B. Preferentially interacts with prenylated GTPases. Post-translationally, serotonylated on Gln residues by TGM2 in response to hypoxia, leading to its inactivation.

It is found in the cytoplasm. The protein localises to the cytosol. The protein resides in the endoplasmic reticulum. It localises to the mitochondrion. Its subcellular location is the nucleus. In terms of biological role, acts as a GEF (guanine nucleotide exchange factor) for the Rho family of small GTP-binding proteins (G proteins) that stimulates the dissociation of GDP to enable subsequent binding of GTP. Additionally, appears to chaperone the processing and/or trafficking of small GTPases containing a C-terminal polybasic region independently of GEF activity. Targets include RAP1A/RAP1B, RHOA, RHOB, RHOC, RAC1 and KRAS. Regulates mitochondrial dynamics by controlling RHOT function to promote mitochondrial fission during high calcium conditions. Able to promote the Ca(2+) release from the endoplasmic reticulum via both inositol trisphosphate (Ins3P) and ryanodine sensitive receptors leading to a enhanced mitochondrial Ca(2+) uptake. Its function is as follows. Acts as a GEF (guanine nucleotide exchange factor) for unprenylated RHOA. Chaperones the entry and passage of small GTPases through the prenylation pathway. Recognizes the last amino acid in the GTPase C-terminal CAAX motif with a preference for 'Leu' over 'Met', indicating involvement in the geranylgeranylation pathway. May also recognize prenylated GTPases. Functionally, acts as a GEF (guanine nucleotide exchange factor) for prenylated RHOA. Acts as a GEF for RHOC. Chaperones the downstream trafficking and/or processing of small newly prenylated GTPases. Escorts RAC1 to the nucleus. The polypeptide is Rap1 GTPase-GDP dissociation stimulator 1 (Mus musculus (Mouse)).